A 246-amino-acid chain; its full sequence is Acetoacetate decarboxylase (246 aa).

The Schiff-base intermediate with acetoacetate role is filled by Lys-116.

The protein belongs to the ADC family.

It carries out the reaction acetoacetate + H(+) = acetone + CO2. Functionally, catalyzes the conversion of acetoacetate to acetone and carbon dioxide. This Burkholderia vietnamiensis (strain G4 / LMG 22486) (Burkholderia cepacia (strain R1808)) protein is Acetoacetate decarboxylase.